A 1231-amino-acid chain; its full sequence is Alpha-protein kinase 1 (1231 aa).

ADP-D-glycero-beta-D-manno-heptose is bound by residues Phe61, Gln67, Arg116, 150-153, Asp231, Lys233, 236-237, and Phe295; these read RQAR and ST. 6 disordered regions span residues 508–540, 609–637, 692–739, 767–791, 811–843, and 859–888; these read ERVSSQDSRSTASSKMSKKDQGKLQRERGRSWT, GSGQEKHPVEAQSSEAVSEEPKRNRSSRA, GSNN…GDVP, TFAPSSVDPEGETAESTDDGLSPSQ, PDGSVQNADSAKTGCSVRDQTVDPDASTVDEEG, and AHRPRALRSGQSAEGPKSFVNGSRPSPIFD. Residues 509–522 are compositionally biased toward polar residues; sequence RVSSQDSRSTASSK. The segment covering 524–537 has biased composition (basic and acidic residues); sequence SKKDQGKLQRERGR. Residues 700–714 show a composition bias toward low complexity; it reads SSHSCGSDSWSLSSS. Acidic residues predominate over residues 775–784; sequence PEGETAESTD. In terms of domain architecture, Alpha-type protein kinase spans 1003 to 1223; it reads KYSKKSELWT…ICHRLSLTRP (221 aa).

Belongs to the protein kinase superfamily. Alpha-type protein kinase family. ALPK subfamily. As to expression, widely expressed. Expressed in the retina and in sweat glands, especially in the myoepithelial cells.

The protein localises to the cytoplasm. Its subcellular location is the cytosol. The protein resides in the cytoskeleton. It localises to the spindle pole. It is found in the microtubule organizing center. The protein localises to the centrosome. Its subcellular location is the cell projection. The protein resides in the cilium. The enzyme catalyses L-seryl-[protein] + ATP = O-phospho-L-seryl-[protein] + ADP + H(+). It catalyses the reaction L-threonyl-[protein] + ATP = O-phospho-L-threonyl-[protein] + ADP + H(+). With respect to regulation, serine/threonine-protein kinase activity is stimulated upon ADP-D-glycero-beta-D-manno-heptose (ADP-Heptose)-binding. Serine/threonine-protein kinase that detects bacterial pathogen-associated molecular pattern metabolites (PAMPs) and initiates an innate immune response, a critical step for pathogen elimination and engagement of adaptive immunity. Specifically recognizes and binds ADP-D-glycero-beta-D-manno-heptose (ADP-Heptose), a potent PAMP present in all Gram-negative and some Gram-positive bacteria. ADP-Heptose-binding stimulates its kinase activity to phosphorylate and activate TIFA, triggering pro-inflammatory NF-kappa-B signaling. May be involved in monosodium urate monohydrate (MSU)-induced inflammation by mediating phosphorylation of unconventional myosin MYO9A. May also play a role in apical protein transport by mediating phosphorylation of unconventional myosin MYO1A. May play a role in ciliogenesis. This is Alpha-protein kinase 1 from Mus musculus (Mouse).